The following is a 716-amino-acid chain: Calpain clp-4 (716 aa).

Residues 31 to 53 (DDDDKQEAPVAVSKAPKGKGSNH) are disordered. The region spanning 240–536 (LFEDPEFPAT…FTQMEVCNLT (297 aa)) is the Calpain catalytic domain. Catalysis depends on residues Cys-295, His-452, and Asn-476.

Belongs to the peptidase C2 family.

Calcium-regulated non-lysosomal thiol-protease which catalyzes limited proteolysis of substrates. Promotes starvation-induced muscle atrophy. The protein is Calpain clp-4 of Caenorhabditis elegans.